We begin with the raw amino-acid sequence, 359 residues long: Pyruvate dehydrogenase E1 component subunit beta, mitochondrial (359 aa).

A mitochondrion-targeting transit peptide spans 1 to 30 (MAAVSGLVRRPLREVSRLLKRRFHWTAPAA). Phosphotyrosine is present on Y67. E89 provides a ligand contact to thiamine diphosphate. K(+)-binding residues include I142, A190, I191, D193, and N195. N6-acetyllysine is present on K354.

Heterotetramer of two PDHA1 and two PDHB subunits. The heterotetramer interacts with DLAT, and is part of the multimeric pyruvate dehydrogenase complex that contains multiple copies of pyruvate dehydrogenase (E1), dihydrolipoamide acetyltransferase (DLAT, E2) and lipoamide dehydrogenase (DLD, E3). These subunits are bound to an inner core composed of about 48 DLAT and 12 PDHX molecules. Interacts with DLAT. Requires thiamine diphosphate as cofactor.

The protein localises to the mitochondrion matrix. The catalysed reaction is N(6)-[(R)-lipoyl]-L-lysyl-[protein] + pyruvate + H(+) = N(6)-[(R)-S(8)-acetyldihydrolipoyl]-L-lysyl-[protein] + CO2. Functionally, the pyruvate dehydrogenase complex catalyzes the overall conversion of pyruvate to acetyl-CoA and CO(2), and thereby links the glycolytic pathway to the tricarboxylic cycle. This is Pyruvate dehydrogenase E1 component subunit beta, mitochondrial (PDHB) from Pongo abelii (Sumatran orangutan).